The following is a 773-amino-acid chain: MQNYQSHSIKVLKGLEGVRKRPGMYIGDTNVGGLHHMVYEVVDNAVDESMAGFCDTINITLTDEGSCIVEDNGRGIPVDIHPTEKIPACTVVLTILHAGGKFDNDTYKVSGGLHGVGVSVVNALSKRLIMTIKKEGQIYRQEFEKGIPTSELEIIGKTKSAKESGTTIEFFPDESVMEVVEFQAGILQKRFKEMAYLNDGLKISFKEEKTQLQETYFYEDGLKQFVKDSAKKELLTPIISFKSMDEETRTSIEVALAYADDYNENTLSFVNNIKTSEGGTHEAGFKMGLSKAILQYIGNNIKTKESRPISEDIKEGLIAVVSLKMSEPLFEGQTKSKLGSSYARALVSKLVYDKIHQFLEENPNEAKIIANKALLAAKAREASKKARELTRKKDNLSVGTLPGKLADCQSKDPLESEIFLVEGDSAGGSAKQGRDRVFQAILPLKGKILNVEKSHLSKILKSEEIKNMITAFGCGIQESFDIERLRYHKIIIMTDADVDGSHIQTLLMTFFYRYLRPLIEQGHVYIAQAPLYKYKKGKTEIYLKDSVALDHFLIEHGINSVDIEGIGKNDLMNLLKVARHYRYALLELEKRYNLLEILRFLIETKDALSLDMKVLEKSILEKLEGLNYQILRSFATEESLHLHTQTPKGLVEFNLDDNLFKEVLFEEANYTYQKLMEYNLDFLENKDILAFLEEVENHAKKGANIQRYKGLGEMNPNDLWETTMHKENRSLIKLKIEDLEKTDAVFSLCMGDEVEPRRAFIQAHAKDVKQLDV.

The region spanning Ser416–Pro530 is the Toprim domain. Positions 422, 495, and 497 each coordinate Mg(2+).

It belongs to the type II topoisomerase GyrB family. Heterotetramer, composed of two GyrA and two GyrB chains. In the heterotetramer, GyrA contains the active site tyrosine that forms a transient covalent intermediate with DNA, while GyrB binds cofactors and catalyzes ATP hydrolysis. Requires Mg(2+) as cofactor. Mn(2+) is required as a cofactor. The cofactor is Ca(2+).

The protein resides in the cytoplasm. It carries out the reaction ATP-dependent breakage, passage and rejoining of double-stranded DNA.. A type II topoisomerase that negatively supercoils closed circular double-stranded (ds) DNA in an ATP-dependent manner to modulate DNA topology and maintain chromosomes in an underwound state. Negative supercoiling favors strand separation, and DNA replication, transcription, recombination and repair, all of which involve strand separation. Also able to catalyze the interconversion of other topological isomers of dsDNA rings, including catenanes and knotted rings. Type II topoisomerases break and join 2 DNA strands simultaneously in an ATP-dependent manner. This chain is DNA gyrase subunit B, found in Helicobacter pylori (strain ATCC 700392 / 26695) (Campylobacter pylori).